Reading from the N-terminus, the 1396-residue chain is ATP-binding cassette transporter pdr1 (1396 aa).

The disordered stretch occupies residues 1 to 22 (MSEQEKGKGDLDDPNSKNTKCP). The region spanning 73–320 (LHPINIIFRT…FLDLGFIPAK (248 aa)) is the ABC transporter 1 domain. In terms of domain architecture, ABC transmembrane type-2 1 spans 412–622 (LQVFATAKVT…GYESIMLNEF (211 aa)). The next 6 helical transmembrane spans lie at 431-451 (YIAT…SLFY), 466-486 (VLSN…DIIF), 512-532 (LVEF…VYFL), 543-563 (FIFY…FRFI), 572-592 (IAAL…GAVM), and 680-700 (GIIL…ANFI). Residues 758 to 1001 (LCWRDLNFTV…LVNYFKRIHG (244 aa)) form the ABC transporter 2 domain. 794–801 (GENKSGKS) contacts ATP. The ABC transmembrane type-2 2 domain occupies 1071–1286 (FQIYKISMRN…FLEGMIGGVL (216 aa)). A run of 5 helical transmembrane segments spans residues 1095–1115 (VAFN…QGVG), 1166–1186 (FIIA…TLFF), 1208–1228 (FAWL…IGIA), 1245–1265 (FVFI…VGFW), and 1361–1381 (CIMI…YYII).

It belongs to the ABC transporter superfamily. ABCG family. PDR (TC 3.A.1.205) subfamily.

Its subcellular location is the endoplasmic reticulum membrane. The polypeptide is ATP-binding cassette transporter pdr1 (pdr1) (Schizosaccharomyces pombe (strain 972 / ATCC 24843) (Fission yeast)).